Here is a 345-residue protein sequence, read N- to C-terminus: UPF0324 membrane protein RB0971 (345 aa).

10 helical membrane-spanning segments follow: residues 13-32, 42-61, 93-115, 130-152, 161-183, 193-215, 228-247, 262-284, 291-310, and 320-342; these read SLSVVLSTYGPGLLVTAAVA, YGAPAMLMALLLGIAFHFLA, LLIGLGGGTILLLVSAIVATILF, ALLTSGAVAICGASAAMAIAAVL, NLIFTVLSVTVLSTLAMIGYPIV, ATGIFFGGTIHDVAQVVGAGFSV, LIRVTMLAPVVLIFSLVLRS, VPGFVLAFLVLAGFNSAGLVPVL, AISRWALLAGIVAVGMKTSL, and AVALVVAETLFIAVFILAGMYYL.

This sequence belongs to the UPF0324 family.

It is found in the cell membrane. This Rhizobium meliloti (strain 1021) (Ensifer meliloti) protein is UPF0324 membrane protein RB0971.